We begin with the raw amino-acid sequence, 2439 residues long: Centrosomal protein of 290 kDa (2439 aa).

Coiled-coil stretches lie at residues 75–913 (AEQA…VVTE) and 1271–1576 (NTML…YMDT). Disordered regions lie at residues 1802–1824 (ETLN…EKEA), 1867–1890 (ELDR…KSSK), and 2017–2048 (ESRL…FQKE). Positions 2039 to 2048 (SQREHEFQKE) are enriched in basic and acidic residues. Residues 2046–2394 (QKENLRLSTE…KLTQELKHFD (349 aa)) are a coiled coil.

In terms of assembly, part of the tectonic-like complex (also named B9 complex).

It is found in the cytoplasm. Its subcellular location is the cytoskeleton. The protein resides in the microtubule organizing center. It localises to the centrosome. The protein localises to the centriolar satellite. It is found in the nucleus. Its subcellular location is the cilium basal body. In terms of biological role, involved in early and late steps in cilia formation. May play a role in early ciliogenesis in the disappearance of centriolar satellites and in the transition of primary ciliar vesicles (PCVs) to capped ciliary vesicles (CCVs). In the ciliary transition zone is part of the tectonic-like complex which is required for tissue-specific ciliogenesis and may regulate ciliary membrane composition. Involved in regulation of the BBSome complex integrity and in ciliary targeting of selected BBSome cargos. Required for the correct localization of ciliary and phototransduction proteins in retinal photoreceptor cells; may play a role in ciliary transport processes. Involved in development of the nervous system and kidney. In Danio rerio (Zebrafish), this protein is Centrosomal protein of 290 kDa (cep290).